The following is a 183-amino-acid chain: uncharacterized protein (183 aa).

4 helical membrane-spanning segments follow: residues 37-59, 79-98, 110-132, and 142-161; these read LFGYISVGFLLFHPLLEVLPRQF, AILLGIAGWAVMLTLAVTSV, WRTFHGILAVVLITVVGYHVLVL, and AFYAVLLAGGYVTMIKTYVF.

It localises to the cell membrane. This is an uncharacterized protein from Archaeoglobus fulgidus (strain ATCC 49558 / DSM 4304 / JCM 9628 / NBRC 100126 / VC-16).